A 309-amino-acid polypeptide reads, in one-letter code: Tagatose-6-phosphate kinase (309 aa).

It belongs to the carbohydrate kinase PfkB family. LacC subfamily.

The catalysed reaction is D-tagatofuranose 6-phosphate + ATP = D-tagatofuranose 1,6-bisphosphate + ADP + H(+). The protein operates within carbohydrate metabolism; D-tagatose 6-phosphate degradation; D-glyceraldehyde 3-phosphate and glycerone phosphate from D-tagatose 6-phosphate: step 1/2. The sequence is that of Tagatose-6-phosphate kinase from Streptococcus pyogenes serotype M5 (strain Manfredo).